Consider the following 388-residue polypeptide: Carbamoyl phosphate synthase small chain (388 aa).

The CPSase stretch occupies residues 1 to 192 (MPLSDAMPAL…FNPDGTVKNG (192 aa)). L-glutamine-binding residues include Ser51, Gly244, and Gly246. A Glutamine amidotransferase type-1 domain is found at 196–382 (TVVALDFGVK…VHQMRTTKQA (187 aa)). Cys272 (nucleophile) is an active-site residue. Residues Met273, Gln276, Asn312, and Phe315 each coordinate L-glutamine. Residues His355 and Glu357 contribute to the active site.

It belongs to the CarA family. As to quaternary structure, composed of two chains; the small (or glutamine) chain promotes the hydrolysis of glutamine to ammonia, which is used by the large (or ammonia) chain to synthesize carbamoyl phosphate. Tetramer of heterodimers (alpha,beta)4.

The catalysed reaction is hydrogencarbonate + L-glutamine + 2 ATP + H2O = carbamoyl phosphate + L-glutamate + 2 ADP + phosphate + 2 H(+). It carries out the reaction L-glutamine + H2O = L-glutamate + NH4(+). It functions in the pathway amino-acid biosynthesis; L-arginine biosynthesis; carbamoyl phosphate from bicarbonate: step 1/1. It participates in pyrimidine metabolism; UMP biosynthesis via de novo pathway; (S)-dihydroorotate from bicarbonate: step 1/3. Small subunit of the glutamine-dependent carbamoyl phosphate synthetase (CPSase). CPSase catalyzes the formation of carbamoyl phosphate from the ammonia moiety of glutamine, carbonate, and phosphate donated by ATP, constituting the first step of 2 biosynthetic pathways, one leading to arginine and/or urea and the other to pyrimidine nucleotides. The small subunit (glutamine amidotransferase) binds and cleaves glutamine to supply the large subunit with the substrate ammonia. The chain is Carbamoyl phosphate synthase small chain from Nostoc sp. (strain PCC 7120 / SAG 25.82 / UTEX 2576).